A 148-amino-acid polypeptide reads, in one-letter code: Large ribosomal subunit protein bL9 (148 aa).

This sequence belongs to the bacterial ribosomal protein bL9 family.

Its function is as follows. Binds to the 23S rRNA. The protein is Large ribosomal subunit protein bL9 of Staphylococcus haemolyticus (strain JCSC1435).